A 521-amino-acid polypeptide reads, in one-letter code: GMP synthase [glutamine-hydrolyzing] (521 aa).

Residues 5–203 (KILILDFGSQ…VHEICGCGRD (199 aa)) form the Glutamine amidotransferase type-1 domain. Residue Cys82 is the Nucleophile of the active site. Active-site residues include His177 and Glu179. Residues 204 to 396 (WNMPDYVNEA…LGLPHEMVYR (193 aa)) form the GMPS ATP-PPase domain. 231-237 (SGGVDSS) lines the ATP pocket.

In terms of assembly, homodimer.

It carries out the reaction XMP + L-glutamine + ATP + H2O = GMP + L-glutamate + AMP + diphosphate + 2 H(+). Its pathway is purine metabolism; GMP biosynthesis; GMP from XMP (L-Gln route): step 1/1. Its function is as follows. Catalyzes the synthesis of GMP from XMP. The protein is GMP synthase [glutamine-hydrolyzing] of Aromatoleum aromaticum (strain DSM 19018 / LMG 30748 / EbN1) (Azoarcus sp. (strain EbN1)).